Reading from the N-terminus, the 203-residue chain is Small ribosomal subunit protein uS4 (203 aa).

The region spanning 93-156 (QRLDNVVYRL…MKVPAILEAV (64 aa)) is the S4 RNA-binding domain.

Belongs to the universal ribosomal protein uS4 family. In terms of assembly, part of the 30S ribosomal subunit. Contacts protein S5. The interaction surface between S4 and S5 is involved in control of translational fidelity.

Its function is as follows. One of the primary rRNA binding proteins, it binds directly to 16S rRNA where it nucleates assembly of the body of the 30S subunit. In terms of biological role, with S5 and S12 plays an important role in translational accuracy. This chain is Small ribosomal subunit protein uS4, found in Lactococcus lactis subsp. cremoris (strain MG1363).